We begin with the raw amino-acid sequence, 233 residues long: tRNA (guanine-N(7)-)-methyltransferase (233 aa).

S-adenosyl-L-methionine contacts are provided by E64, E89, D116, and D138. The active site involves D138. Residues K142, D174, and 212 to 215 contribute to the substrate site; that span reads TRYE.

It belongs to the class I-like SAM-binding methyltransferase superfamily. TrmB family.

The catalysed reaction is guanosine(46) in tRNA + S-adenosyl-L-methionine = N(7)-methylguanosine(46) in tRNA + S-adenosyl-L-homocysteine. It participates in tRNA modification; N(7)-methylguanine-tRNA biosynthesis. Catalyzes the formation of N(7)-methylguanine at position 46 (m7G46) in tRNA. The polypeptide is tRNA (guanine-N(7)-)-methyltransferase (Rhizobium johnstonii (strain DSM 114642 / LMG 32736 / 3841) (Rhizobium leguminosarum bv. viciae)).